A 227-amino-acid chain; its full sequence is Uracil-DNA glycosylase (227 aa).

Residue aspartate 64 is the Proton acceptor of the active site.

The protein belongs to the uracil-DNA glycosylase (UDG) superfamily. UNG family.

It localises to the cytoplasm. The catalysed reaction is Hydrolyzes single-stranded DNA or mismatched double-stranded DNA and polynucleotides, releasing free uracil.. Functionally, excises uracil residues from the DNA which can arise as a result of misincorporation of dUMP residues by DNA polymerase or due to deamination of cytosine. The polypeptide is Uracil-DNA glycosylase (Erwinia tasmaniensis (strain DSM 17950 / CFBP 7177 / CIP 109463 / NCPPB 4357 / Et1/99)).